Consider the following 354-residue polypeptide: Histidinol-phosphate aminotransferase (354 aa).

Position 210 is an N6-(pyridoxal phosphate)lysine (Lys-210).

The protein belongs to the class-II pyridoxal-phosphate-dependent aminotransferase family. Histidinol-phosphate aminotransferase subfamily. As to quaternary structure, homodimer. Pyridoxal 5'-phosphate serves as cofactor.

It catalyses the reaction L-histidinol phosphate + 2-oxoglutarate = 3-(imidazol-4-yl)-2-oxopropyl phosphate + L-glutamate. Its pathway is amino-acid biosynthesis; L-histidine biosynthesis; L-histidine from 5-phospho-alpha-D-ribose 1-diphosphate: step 7/9. This chain is Histidinol-phosphate aminotransferase, found in Clostridium botulinum (strain ATCC 19397 / Type A).